The sequence spans 529 residues: Listeriolysin O (529 aa).

The N-terminal stretch at 1–24 (MKKIMLVFITLILVSLPIAQQTEA) is a signal peptide. The next 4 beta stranded transmembrane spans lie at 214 to 227 (ESQL…AFKA), 234 to 243 (VNFGAISEGK), 312 to 321 (STKVKAAFDA), and 329 to 341 (SGDV…IKNS). The Conserved undecapeptide motif lies at 483 to 493 (ECTGLAWEWWR). The Cholesterol binding motif lies at 515 to 516 (TL).

Belongs to the cholesterol-dependent cytolysin family. In terms of assembly, homooligomeric pore complex of 35 to 50 subunits; when inserted in the host membrane.

Its subcellular location is the secreted. The protein localises to the host membrane. The protein resides in the host cell membrane. Its activity is regulated as follows. Activity of listeriolysin O is regulated on multiple levels. It should be high in the phagosome, thereby allowing escape of the bacteria from the phagosomal compartment. Then, once inside the host cytosol, the activity must be controlled to prevent lysis of the host plasma membrane and loss of the intracellular environment. In terms of biological role, a cholesterol-dependent toxin that causes cytolysis by forming pores in cholesterol containing host membranes. After binding to target membranes, the protein undergoes a major conformation change, leading to its insertion in the host membrane and formation of an oligomeric pore complex. Cholesterol is required for binding to host membranes, membrane insertion and pore formation; cholesterol binding is mediated by a Thr-Leu pair in the C-terminus. Acts as a major virulence factor required for the escape of bacteria from phagosomal vacuoles and entry into the host cytosol. Can be reversibly inactivated by oxidation. The chain is Listeriolysin O (hly) from Listeria monocytogenes serotype 4b (strain F2365).